We begin with the raw amino-acid sequence, 456 residues long: MRAWEEFLLLQEKEIGTDTVNKWLRSLKVLCFDACNLYLEAKDSFQVTWFEEHIRHKVKANLINNNGKPIRVRVTSLDKSTPFKESQIQQEKTAYFTMQYGDIDPQMSFANFLVTPENDLPVRILQEFAKVSEQGKGFPFNPIYLFGPESSGKTHLMQAAVGILREAGVKTLYVSSQLFTEHLVSAIRSGEMQRFRAFYRNVEALFIEDIEVLSGKGATQEEFFHTFNSLHTEGKLIVISSIFAPGDLKAMEERLISRFEWGIAVPVSPLTREGLKSFLERRIEQLNIRIEETALDFLIQALSSHIKSLLHALTTLAKRVAYKKLSHQLLYQGDVEALLQDVLQAAEHIRLTPSGIVRATAQYYGVSPENILGRSQSREYVLPRQVAMFLCRQKLSLSYVKIGEVFSRDHSTVISSIRAISQKLDEDDRESDVSCGVQELTKRLSSAYQSLDLIVD.

The tract at residues 1–68 is domain I, interacts with DnaA modulators; it reads MRAWEEFLLL…KANLINNNGK (68 aa). The tract at residues 68–101 is domain II; the sequence is KPIRVRVTSLDKSTPFKESQIQQEKTAYFTMQYG. Positions 102-320 are domain III, AAA+ region; sequence DIDPQMSFAN…HALTTLAKRV (219 aa). Residues serine 150, glycine 152, lysine 153, and threonine 154 each contribute to the ATP site. The domain IV, binds dsDNA stretch occupies residues 321 to 456; that stretch reads AYKKLSHQLL…AYQSLDLIVD (136 aa).

It belongs to the DnaA family. In terms of assembly, oligomerizes as a right-handed, spiral filament on DNA at oriC.

Its subcellular location is the cytoplasm. Plays an essential role in the initiation and regulation of chromosomal replication. ATP-DnaA binds to the origin of replication (oriC) to initiate formation of the DNA replication initiation complex once per cell cycle. Binds the DnaA box (a 9 base pair repeat at the origin) and separates the double-stranded (ds)DNA. Forms a right-handed helical filament on oriC DNA; dsDNA binds to the exterior of the filament while single-stranded (ss)DNA is stabiized in the filament's interior. The ATP-DnaA-oriC complex binds and stabilizes one strand of the AT-rich DNA unwinding element (DUE), permitting loading of DNA polymerase. After initiation quickly degrades to an ADP-DnaA complex that is not apt for DNA replication. Binds acidic phospholipids. The sequence is that of Chromosomal replication initiator protein DnaA 1 from Chlamydia muridarum (strain MoPn / Nigg).